The primary structure comprises 79 residues: MEMTQAVLYIAGALMMGLGALGAAVGIGVLGGRFLEGAARQPELIPMLRTQFFIVMGLVDAVPMIAVGLAMYVLFAVAG.

The next 2 membrane-spanning stretches (helical) occupy residues 10-30 (IAGA…IGVL) and 52-72 (FFIV…LAMY).

This sequence belongs to the ATPase C chain family. In terms of assembly, F-type ATPases have 2 components, F(1) - the catalytic core - and F(0) - the membrane proton channel. F(1) has five subunits: alpha(3), beta(3), gamma(1), delta(1), epsilon(1). F(0) has three main subunits: a(1), b(2) and c(10-14). The alpha and beta chains form an alternating ring which encloses part of the gamma chain. F(1) is attached to F(0) by a central stalk formed by the gamma and epsilon chains, while a peripheral stalk is formed by the delta and b chains.

It localises to the cell inner membrane. F(1)F(0) ATP synthase produces ATP from ADP in the presence of a proton or sodium gradient. F-type ATPases consist of two structural domains, F(1) containing the extramembraneous catalytic core and F(0) containing the membrane proton channel, linked together by a central stalk and a peripheral stalk. During catalysis, ATP synthesis in the catalytic domain of F(1) is coupled via a rotary mechanism of the central stalk subunits to proton translocation. Its function is as follows. Key component of the F(0) channel; it plays a direct role in translocation across the membrane. A homomeric c-ring of between 10-14 subunits forms the central stalk rotor element with the F(1) delta and epsilon subunits. This is ATP synthase subunit c from Thiobacillus denitrificans (strain ATCC 25259 / T1).